A 380-amino-acid polypeptide reads, in one-letter code: Probable pectin lyase A (380 aa).

Positions 1-20 (MRYTSLFTAVTAALASTAAA) are cleaved as a signal peptide. 2 disulfide bridges follow: Cys-83-Cys-102 and Cys-92-Cys-226. Asn-129 is a glycosylation site (N-linked (GlcNAc...) asparagine). Residue Arg-256 is part of the active site. A disulfide bridge links Cys-323 with Cys-331.

The protein belongs to the polysaccharide lyase 1 family.

It localises to the secreted. The catalysed reaction is Eliminative cleavage of (1-&gt;4)-alpha-D-galacturonan methyl ester to give oligosaccharides with 4-deoxy-6-O-methyl-alpha-D-galact-4-enuronosyl groups at their non-reducing ends.. Pectinolytic enzymes consist of four classes of enzymes: pectin lyase, polygalacturonase, pectin methylesterase and rhamnogalacturonase. Among pectinolytic enzymes, pectin lyase is the most important in depolymerization of pectin, since it cleaves internal glycosidic bonds of highly methylated pectins. In Aspergillus fumigatus (strain ATCC MYA-4609 / CBS 101355 / FGSC A1100 / Af293) (Neosartorya fumigata), this protein is Probable pectin lyase A (pelA).